Consider the following 709-residue polypeptide: Elongation factor G (709 aa).

The region spanning 10 to 295 is the tr-type G domain; that stretch reads NQVRNIGIMA…AVVDYLPSPE (286 aa). Residues 19–26, 91–95, and 145–148 each bind GTP; these read AHIDAGKT, DTPGH, and NKMD.

The protein belongs to the TRAFAC class translation factor GTPase superfamily. Classic translation factor GTPase family. EF-G/EF-2 subfamily.

It is found in the cytoplasm. Its function is as follows. Catalyzes the GTP-dependent ribosomal translocation step during translation elongation. During this step, the ribosome changes from the pre-translocational (PRE) to the post-translocational (POST) state as the newly formed A-site-bound peptidyl-tRNA and P-site-bound deacylated tRNA move to the P and E sites, respectively. Catalyzes the coordinated movement of the two tRNA molecules, the mRNA and conformational changes in the ribosome. The polypeptide is Elongation factor G (Bifidobacterium animalis subsp. lactis (strain AD011)).